Consider the following 968-residue polypeptide: RNA polymerase-associated protein RapA (968 aa).

In terms of domain architecture, Helicase ATP-binding spans 163 to 332 (EVGRRYAPRV…FARLRLLDPD (170 aa)). 176 to 183 (DEVGLGKT) is an ATP binding site. Residues 278 to 281 (DEAH) carry the DEAH box motif. One can recognise a Helicase C-terminal domain in the interval 491-655 (RVDWLIEFLK…EFAEDLLNVL (165 aa)).

This sequence belongs to the SNF2/RAD54 helicase family. RapA subfamily. Interacts with the RNAP. Has a higher affinity for the core RNAP than for the holoenzyme. Its ATPase activity is stimulated by binding to RNAP.

Its function is as follows. Transcription regulator that activates transcription by stimulating RNA polymerase (RNAP) recycling in case of stress conditions such as supercoiled DNA or high salt concentrations. Probably acts by releasing the RNAP, when it is trapped or immobilized on tightly supercoiled DNA. Does not activate transcription on linear DNA. Probably not involved in DNA repair. This chain is RNA polymerase-associated protein RapA, found in Shewanella baltica (strain OS155 / ATCC BAA-1091).